The chain runs to 165 residues: Bark lectin isoform 1 (165 aa).

Asn27 and Asn57 each carry an N-linked (GlcNAc...) asparagine glycan. 2 cysteine pairs are disulfide-bonded: Cys33–Cys80 and Cys126–Cys133.

The protein belongs to the protease inhibitor I3 (leguminous Kunitz-type inhibitor) family. In terms of assembly, dimer.

Glucose and N-acetylglucosamine binding lectin. Has hemagglutinating activity against human and rabbit erythrocytes which does not require divalent cations. Inhibits factor Xa and, to a lesser extent, trypsin. Does not inhibit neutrophil elastase, human plasma kallikrein, papain, human plasmin, porcine pancreatic kallikrein and bovin chymotrypsin. Has insecticidal activity against the termite species N.corniger. Induces apoptosis in prostrate cancer cell lines DU145 and PC3. This chain is Bark lectin isoform 1, found in Crateva tapia (Garlic-pear tree).